Reading from the N-terminus, the 462-residue chain is Argininosuccinate lyase (462 aa).

Belongs to the lyase 1 family. Argininosuccinate lyase subfamily.

The protein resides in the cytoplasm. It carries out the reaction 2-(N(omega)-L-arginino)succinate = fumarate + L-arginine. The protein operates within amino-acid biosynthesis; L-arginine biosynthesis; L-arginine from L-ornithine and carbamoyl phosphate: step 3/3. This is Argininosuccinate lyase from Streptococcus agalactiae serotype V (strain ATCC BAA-611 / 2603 V/R).